The following is a 389-amino-acid chain: Radial spoke head protein 3 homolog B (389 aa).

The interval 63–106 (PTGQVPGQPDPLELQRQQQARRRALARKRAQEQLKPRTPEPVEG) is disordered. Basic residues predominate over residues 81 to 90 (QARRRALARK). Residues 91–106 (RAQEQLKPRTPEPVEG) show a composition bias toward basic and acidic residues. At Thr143 the chain carries Phosphothreonine; by MAPK1. Residues 206–242 (YEEIRNVELAEVQRLEEQERRHREEKERRKKQQWEIV) are a coiled coil. Positions 332–389 (EAMPPGQKTNVINGPNTVTDPSVTTLHTQKPVLDRVSSQPAPSQERKPVEEGGHLMAE) are disordered. The span at 338–359 (QKTNVINGPNTVTDPSVTTLHT) shows a compositional bias: polar residues. Positions 375–389 (QERKPVEEGGHLMAE) are enriched in basic and acidic residues.

It belongs to the flagellar radial spoke RSP3 family. In terms of assembly, component of the axonemal radial spoke 1 (RS1) and 2 (RS2) complexes, at least composed of spoke head proteins RSPH1, RSPH3B, RSPH9 and the cilia-specific component RSPH4A or sperm-specific component RSPH6A, spoke stalk proteins RSPH14, DNAJB13, DYDC1, ROPN1L and NME5, and the RS1 complex-specific anchor protein IQUB. Interacts with IQUB. Interacts with phosphorylated MAPK1. Interacts with MEK1. Interacts with PKA regulatory subunits PRKAR1A and PRKAR1B. Interacts with RSPH1. Interacts with RSPH4A. Interacts with RSPH6A. Interacts with RSPH9. Interacts with LRRC23. In terms of tissue distribution, expressed in ependymal cells (at protein level).

It is found in the cytoplasm. The protein localises to the cytoskeleton. Its subcellular location is the cilium axoneme. It localises to the flagellum axoneme. Functionally, functions as part of axonemal radial spoke complexes that play an important part in the motility of sperm and cilia. Functions as a protein kinase A-anchoring protein that scaffolds the cAMP-dependent protein kinase holoenzyme. May serve as a point of convergence for MAPK and PKA signaling in cilia. The protein is Radial spoke head protein 3 homolog B (Rsph3b) of Mus musculus (Mouse).